The following is a 458-amino-acid chain: MQIAQVFGCGRLNGEVKVSGAKNAATKLLVASLLSDQKCTLRNVPDIGDVSLTVELCKSLGAHVSWDKETEVLEIYTPEIQCTRVPPTFSNVNRIPILLLGALLGRCPEGVYVPTVGGDAIGERTLNFHFEGLKQLGVQISSDSSGYYAKAPRGLKGNYIHLPYPSVGATENLILAAIHAKGRTVIKNVALEAEILDLVLFLQKAGADITTDNDRTIDIFGTGGLGSVDHTILPDKIEAASFGMAAVVSGGRVFVRNAKQELLIPFLKMLRSIGGGFLVSESGIEFFQERPLVGGVVLETDVHPGFLTDWQQPFAVLLSQAQGSSVIHETVHENRLGYLHGLQHMGAECQLFHQCLSTKACRYAIGNFPHSAVIHGATPLWASHLVIPDLRAGFAYVMAALIAEGGGSIIENTHLLDRGYTNWVGKLRSLGAKIQIFDMEQEELTTSPKSLALRDASL.

Residue 22-23 participates in phosphoenolpyruvate binding; the sequence is KN. Position 94 (Arg94) interacts with UDP-N-acetyl-alpha-D-glucosamine. Catalysis depends on Asp119, which acts as the Proton donor. 2 residues coordinate UDP-N-acetyl-alpha-D-glucosamine: Asp309 and Val331.

The protein belongs to the EPSP synthase family. MurA subfamily.

The protein resides in the cytoplasm. It catalyses the reaction phosphoenolpyruvate + UDP-N-acetyl-alpha-D-glucosamine = UDP-N-acetyl-3-O-(1-carboxyvinyl)-alpha-D-glucosamine + phosphate. Its pathway is cell wall biogenesis; peptidoglycan biosynthesis. In terms of biological role, cell wall formation. Adds enolpyruvyl to UDP-N-acetylglucosamine. The polypeptide is UDP-N-acetylglucosamine 1-carboxyvinyltransferase (Chlamydia pneumoniae (Chlamydophila pneumoniae)).